The primary structure comprises 611 residues: MPPYRSRTTTHGRNMAGARGLWRATGMKDEDFGKPIIAVVNSFTQFVPGHVHLKDLGQLVAREIESAGGVAKEFNTIAVDDGIAMGHDGMLYSLPSRELIADSVEYMVNAHCADAMVCISNCDKITPGMLMAALRLNIPVVFVSGGPMEAGKVVWEDSVKKLDLVDAMVAAADDHYTDEQVKAIERSACPTCGSCSGMFTANSMNCLTEALGLSLPGNGSTLATHADRKRLFVEAGHLIVDLARRYYEQDDESVLPRSIATFSAFENAMTLDIAMGGSTNTVLHLLAAAQEAEIDFTMADIDRLSRRVPVLCKVAPAVSSVHMEDVHHAGGIMGILGQLDNAGLLTTSIPTVHSETLAKALDHWDVTRTNSEMVHKFYSAAPGGVPTQVAFSQERRFDKVDTDREKGVIRSKEHAFSQDGGLAVLYGNLAEDGCIVKTAGVDDSILKFSGPARIFESQDSAVLGILNGKIKPGDIVLIRYEGPRGGPGMQEMLYPTSYLKSKGLGKACALITDGRFSGGSSGLSIGHVSPEAAEGGTIGLVREGDIIDIDIPNRKIHLAVDDATVAERRAEQDAAGWKPAEERKRKISTALKAYAAMATSAARGAVRKLPD.

Aspartate 81 serves as a coordination point for Mg(2+). Cysteine 122 is a binding site for [2Fe-2S] cluster. Residues aspartate 123 and lysine 124 each coordinate Mg(2+). Lysine 124 carries the post-translational modification N6-carboxylysine. Cysteine 195 serves as a coordination point for [2Fe-2S] cluster. Glutamate 491 lines the Mg(2+) pocket. Serine 517 acts as the Proton acceptor in catalysis.

The protein belongs to the IlvD/Edd family. As to quaternary structure, homodimer. [2Fe-2S] cluster serves as cofactor. Mg(2+) is required as a cofactor.

It catalyses the reaction (2R)-2,3-dihydroxy-3-methylbutanoate = 3-methyl-2-oxobutanoate + H2O. The catalysed reaction is (2R,3R)-2,3-dihydroxy-3-methylpentanoate = (S)-3-methyl-2-oxopentanoate + H2O. Its pathway is amino-acid biosynthesis; L-isoleucine biosynthesis; L-isoleucine from 2-oxobutanoate: step 3/4. It functions in the pathway amino-acid biosynthesis; L-valine biosynthesis; L-valine from pyruvate: step 3/4. Functions in the biosynthesis of branched-chain amino acids. Catalyzes the dehydration of (2R,3R)-2,3-dihydroxy-3-methylpentanoate (2,3-dihydroxy-3-methylvalerate) into 2-oxo-3-methylpentanoate (2-oxo-3-methylvalerate) and of (2R)-2,3-dihydroxy-3-methylbutanoate (2,3-dihydroxyisovalerate) into 2-oxo-3-methylbutanoate (2-oxoisovalerate), the penultimate precursor to L-isoleucine and L-valine, respectively. This chain is Dihydroxy-acid dehydratase, found in Brucella suis (strain ATCC 23445 / NCTC 10510).